The sequence spans 100 residues: UPF0213 protein YhbQ (100 aa).

The GIY-YIG domain maps to 2–77 (TPWYLYLIRT…KQLTKRQKER (76 aa)).

The protein belongs to the UPF0213 family.

The protein is UPF0213 protein YhbQ of Escherichia coli O8 (strain IAI1).